The primary structure comprises 253 residues: MLAKRIIPCLDVHEGRVVKGTNFVNLRDAGDPVELAALYDREGADELVFLDISASAEGRETMVEVVRRTAEQVFIPFTIGGGLRRVEDIRKMLRAGADKVSLNTSAVQTPGLIEEGAHAFGSQCIVVAIDARQTRPGAWEVYIHGGRTPTGKDVLQWAEEVERLGAGEILLTSMNRDGTKNGYDLELTRAVSRAVSLPVIASGGVGTLEHLAEGLTIGEADAVLAASIFHYQEYSIGEAKAYLEERGIPVRKG.

Active-site residues include Asp11 and Asp130.

The protein belongs to the HisA/HisF family. In terms of assembly, heterodimer of HisH and HisF.

It localises to the cytoplasm. It carries out the reaction 5-[(5-phospho-1-deoxy-D-ribulos-1-ylimino)methylamino]-1-(5-phospho-beta-D-ribosyl)imidazole-4-carboxamide + L-glutamine = D-erythro-1-(imidazol-4-yl)glycerol 3-phosphate + 5-amino-1-(5-phospho-beta-D-ribosyl)imidazole-4-carboxamide + L-glutamate + H(+). Its pathway is amino-acid biosynthesis; L-histidine biosynthesis; L-histidine from 5-phospho-alpha-D-ribose 1-diphosphate: step 5/9. Functionally, IGPS catalyzes the conversion of PRFAR and glutamine to IGP, AICAR and glutamate. The HisF subunit catalyzes the cyclization activity that produces IGP and AICAR from PRFAR using the ammonia provided by the HisH subunit. The protein is Imidazole glycerol phosphate synthase subunit HisF of Desulfitobacterium hafniense (strain DSM 10664 / DCB-2).